Consider the following 306-residue polypeptide: MAAPLIPVLTAPTAAGKTALALRLAREYGLEIVAADAFTVYRGLDLGTAKPTPQERASVPHHLLDVVDVTQSYDVAQYAAQAEAAIVDILARGRLPLVVGGTGFYLSALSRGLPLTPPSDPKMRAALEAELQERGLDALLAEIEQANPAEAARMERNPRRVVRALEVYRAAGRFPGEFGYSPPAFQYQVFAFSPPAAEMEQRVQERTAAMLRAGWPQEAQWLAGQVPPEQEPRPTVWQALGYAEALAVAQGRLSLAGAEQAIALATRQYGKRQLTWMRRQLGAEVQSPDAAEAHLRAFLERSGAPS.

Position 11–18 (11–18) interacts with ATP; it reads APTAAGKT. 13-18 provides a ligand contact to substrate; that stretch reads TAAGKT.

This sequence belongs to the IPP transferase family. In terms of assembly, monomer. It depends on Mg(2+) as a cofactor.

It carries out the reaction adenosine(37) in tRNA + dimethylallyl diphosphate = N(6)-dimethylallyladenosine(37) in tRNA + diphosphate. Functionally, catalyzes the transfer of a dimethylallyl group onto the adenine at position 37 in tRNAs that read codons beginning with uridine, leading to the formation of N6-(dimethylallyl)adenosine (i(6)A). This Deinococcus radiodurans (strain ATCC 13939 / DSM 20539 / JCM 16871 / CCUG 27074 / LMG 4051 / NBRC 15346 / NCIMB 9279 / VKM B-1422 / R1) protein is tRNA dimethylallyltransferase.